The following is a 560-amino-acid chain: Putative transport protein PBPRA2420 (560 aa).

The next 5 helical transmembrane spans lie at 5–25, 37–57, 66–86, 91–111, and 161–181; these read VASL…AVGL, VGNS…GFTF, FMLF…GIFF, HYLL…LAMT, and SLSV…IFLA. RCK C-terminal domains follow at residues 203-292 and 293-377; these read RGIG…FRNG and KEVF…IGFI. The next 6 membrane-spanning stretches (helical) occupy residues 386–406, 409–429, 452–472, 477–497, 506–526, and 539–559; these read LLAF…TLAF, VAFG…LGFL, LMVF…DSFA, MVLV…YLFG, ALLF…DMIN, and AGTY…IIIM.

The protein belongs to the AAE transporter (TC 2.A.81) family. YbjL subfamily.

Its subcellular location is the cell membrane. The chain is Putative transport protein PBPRA2420 from Photobacterium profundum (strain SS9).